The primary structure comprises 47 residues: Photosystem II reaction center protein K (47 aa).

A propeptide spanning residues 1–10 is cleaved from the precursor; sequence MASFTLDLLA. The chain crosses the membrane as a helical span at residues 19-39; that stretch reads FSPLIDILPLIPVFFLLLAFV.

This sequence belongs to the PsbK family. As to quaternary structure, PSII is composed of 1 copy each of membrane proteins PsbA, PsbB, PsbC, PsbD, PsbE, PsbF, PsbH, PsbI, PsbJ, PsbK, PsbL, PsbM, PsbT, PsbX, PsbY, PsbZ, Psb30/Ycf12, peripheral proteins PsbO, CyanoQ (PsbQ), PsbU, PsbV and a large number of cofactors. It forms dimeric complexes.

The protein localises to the cellular thylakoid membrane. Its function is as follows. One of the components of the core complex of photosystem II (PSII). PSII is a light-driven water:plastoquinone oxidoreductase that uses light energy to abstract electrons from H(2)O, generating O(2) and a proton gradient subsequently used for ATP formation. It consists of a core antenna complex that captures photons, and an electron transfer chain that converts photonic excitation into a charge separation. The polypeptide is Photosystem II reaction center protein K (Parasynechococcus marenigrum (strain WH8102)).